Consider the following 189-residue polypeptide: Molybdenum cofactor guanylyltransferase (189 aa).

Residues 12–14, lysine 24, aspartate 68, and aspartate 94 contribute to the GTP site; that span reads LAG. Aspartate 94 contacts Mg(2+).

It belongs to the MobA family. As to quaternary structure, monomer. Mg(2+) is required as a cofactor.

The protein localises to the cytoplasm. It catalyses the reaction Mo-molybdopterin + GTP + H(+) = Mo-molybdopterin guanine dinucleotide + diphosphate. Its function is as follows. Transfers a GMP moiety from GTP to Mo-molybdopterin (Mo-MPT) cofactor (Moco or molybdenum cofactor) to form Mo-molybdopterin guanine dinucleotide (Mo-MGD) cofactor. In Xanthomonas euvesicatoria pv. vesicatoria (strain 85-10) (Xanthomonas campestris pv. vesicatoria), this protein is Molybdenum cofactor guanylyltransferase.